The sequence spans 300 residues: N-acetylmuramic acid 6-phosphate etherase 1 (300 aa).

One can recognise an SIS domain in the interval 57–220; that stretch reads IATAFAQGGR…TTGAMIKSGK (164 aa). The active-site Proton donor is Glu-85. Glu-116 is an active-site residue.

Belongs to the GCKR-like family. MurNAc-6-P etherase subfamily. As to quaternary structure, homodimer.

It catalyses the reaction N-acetyl-D-muramate 6-phosphate + H2O = N-acetyl-D-glucosamine 6-phosphate + (R)-lactate. The protein operates within amino-sugar metabolism; 1,6-anhydro-N-acetylmuramate degradation. Its pathway is amino-sugar metabolism; N-acetylmuramate degradation. It functions in the pathway cell wall biogenesis; peptidoglycan recycling. Specifically catalyzes the cleavage of the D-lactyl ether substituent of MurNAc 6-phosphate, producing GlcNAc 6-phosphate and D-lactate. Together with AnmK, is also required for the utilization of anhydro-N-acetylmuramic acid (anhMurNAc) either imported from the medium or derived from its own cell wall murein, and thus plays a role in cell wall recycling. This is N-acetylmuramic acid 6-phosphate etherase 1 from Vibrio cholerae serotype O1 (strain ATCC 39315 / El Tor Inaba N16961).